The following is a 412-amino-acid chain: CinA-like protein (412 aa).

Belongs to the CinA family.

In Kosmotoga olearia (strain ATCC BAA-1733 / DSM 21960 / TBF 19.5.1), this protein is CinA-like protein.